Consider the following 152-residue polypeptide: Glutaredoxin-related protein 5, mitochondrial (152 aa).

The N-terminal 31 residues, M1–A31, are a transit peptide targeting the mitochondrion. Residues A38–S141 enclose the Glutaredoxin domain. K55 is a binding site for glutathione. Position 55 is an N6-succinyllysine (K55). C63 is a binding site for [2Fe-2S] cluster. Glutathione contacts are provided by residues R93–K97, I105, and C118–D119. S151 carries the post-translational modification Phosphoserine.

Belongs to the glutaredoxin family. Monothiol subfamily. In terms of assembly, homodimer. Interacts with ISCU. Interacts with BOLA1. Detected in bone, liver, muscle and kidney.

The protein resides in the mitochondrion matrix. In terms of biological role, monothiol glutaredoxin involved in mitochondrial iron-sulfur (Fe/S) cluster transfer. Receives 2Fe/2S clusters from scaffold protein ISCU and mediates their transfer to apoproteins, to the 4Fe/FS cluster biosynthesis machinery, or export from mitochondrion. Required for normal regulation of hemoglobin synthesis by the iron-sulfur protein ACO1. The chain is Glutaredoxin-related protein 5, mitochondrial (Glrx5) from Mus musculus (Mouse).